We begin with the raw amino-acid sequence, 62 residues long: Large ribosomal subunit protein bL28 (62 aa).

It belongs to the bacterial ribosomal protein bL28 family.

This is Large ribosomal subunit protein bL28 from Onion yellows phytoplasma (strain OY-M).